A 118-amino-acid polypeptide reads, in one-letter code: MPRVKTGVVRRRRHKKVLKAARGFFSGRRKHFRKAKEQLERSLVYAFRDRRQKKRDIRKLWIIRINAACRLNDINYSRFMNGLKLSGLELDRKILADMAMNDSAAFASLVATAKAALK.

This sequence belongs to the bacterial ribosomal protein bL20 family.

Its function is as follows. Binds directly to 23S ribosomal RNA and is necessary for the in vitro assembly process of the 50S ribosomal subunit. It is not involved in the protein synthesizing functions of that subunit. This is Large ribosomal subunit protein bL20 from Aliarcobacter butzleri (strain RM4018) (Arcobacter butzleri).